Consider the following 329-residue polypeptide: Malate dehydrogenase (329 aa).

Residue 12–18 (GAAGQIG) participates in NAD(+) binding. Substrate is bound by residues arginine 93 and arginine 99. Residues asparagine 106, glutamine 113, and 130-132 (VGN) contribute to the NAD(+) site. Substrate contacts are provided by asparagine 132 and arginine 163. Catalysis depends on histidine 188, which acts as the Proton acceptor.

It belongs to the LDH/MDH superfamily. MDH type 2 family.

It catalyses the reaction (S)-malate + NAD(+) = oxaloacetate + NADH + H(+). Functionally, catalyzes the reversible oxidation of malate to oxaloacetate. This Frankia casuarinae (strain DSM 45818 / CECT 9043 / HFP020203 / CcI3) protein is Malate dehydrogenase.